Here is a 222-residue protein sequence, read N- to C-terminus: Glutathione S-transferase 3 (222 aa).

Positions 2-83 (APLKLYGMPL…YIASKYASEG (82 aa)) constitute a GST N-terminal domain. Glutathione is bound by residues serine 12, 13-14 (PN), 41-42 (HK), 54-55 (QI), and 67-68 (ES). The region spanning 89 to 219 (ATASAAKLEV…AAIPLPPPPS (131 aa)) is the GST C-terminal domain.

This sequence belongs to the GST superfamily. Phi family. As to quaternary structure, homodimer.

The enzyme catalyses RX + glutathione = an S-substituted glutathione + a halide anion + H(+). Conjugation of reduced glutathione to a wide number of exogenous and endogenous hydrophobic electrophiles. Involved in the detoxification of certain herbicides. The sequence is that of Glutathione S-transferase 3 from Zea mays (Maize).